A 410-amino-acid chain; its full sequence is S-adenosylmethionine synthase (410 aa).

Histidine 15 contributes to the ATP binding site. Aspartate 17 is a binding site for Mg(2+). A K(+)-binding site is contributed by glutamate 43. Residues glutamate 56 and glutamine 100 each coordinate L-methionine. Residues 100 to 110 (QSPDIAKGVDT) are flexible loop. ATP is bound by residues 171-173 (DGK), 248-249 (KF), aspartate 257, 263-264 (RK), alanine 280, and lysine 284. Residue aspartate 257 participates in L-methionine binding. Lysine 288 contacts L-methionine.

Belongs to the AdoMet synthase family. As to quaternary structure, homotetramer; dimer of dimers. Requires Mg(2+) as cofactor. K(+) is required as a cofactor.

Its subcellular location is the cytoplasm. The catalysed reaction is L-methionine + ATP + H2O = S-adenosyl-L-methionine + phosphate + diphosphate. It functions in the pathway amino-acid biosynthesis; S-adenosyl-L-methionine biosynthesis; S-adenosyl-L-methionine from L-methionine: step 1/1. In terms of biological role, catalyzes the formation of S-adenosylmethionine (AdoMet) from methionine and ATP. The overall synthetic reaction is composed of two sequential steps, AdoMet formation and the subsequent tripolyphosphate hydrolysis which occurs prior to release of AdoMet from the enzyme. The chain is S-adenosylmethionine synthase from Prochlorococcus marinus (strain MIT 9211).